Consider the following 231-residue polypeptide: Flagellar L-ring protein 2 (231 aa).

Positions 1–15 are cleaved as a signal peptide; the sequence is MKNLILILPLLMLTG. The N-palmitoyl cysteine moiety is linked to residue cysteine 16. Cysteine 16 carries the S-diacylglycerol cysteine lipid modification. Residues 30–54 form a disordered region; the sequence is SPVGSGLRTQADPIPVTPRMRTPVS.

Belongs to the FlgH family. As to quaternary structure, the basal body constitutes a major portion of the flagellar organelle and consists of four rings (L,P,S, and M) mounted on a central rod.

The protein localises to the cell outer membrane. The protein resides in the bacterial flagellum basal body. Functionally, assembles around the rod to form the L-ring and probably protects the motor/basal body from shearing forces during rotation. The protein is Flagellar L-ring protein 2 of Bradyrhizobium diazoefficiens (strain JCM 10833 / BCRC 13528 / IAM 13628 / NBRC 14792 / USDA 110).